Reading from the N-terminus, the 481-residue chain is MNEVSVIKEGWLHKRGEYIKTWRPRYFLLKSDGSFIGYKERPEAPDQTLPPLNNFSVAECQLMKTERPRPNTFVIRCLQWTTVIERTFHVDSPDEREEWIRAIQMVANSLKQRGPGEDAMDYKCGSPSDSSTSEMMEVAVSKARAKVTMNDFDYLKLLGKGTFGKVILVREKATGRYYAMKILRKEVIIAKDEVAHTVTESRVLQNTRHPFLTALKYAFQTHDRLCFVMEYANGGDLFFHLSRERVFTEDRARFYGAEIVSALEYLHSTDVVYRDIKLENLMLDKDGHIKITDFGLSKEGISDGATMKTFCGTPEYLAPEVLEDNDYGRAVDWWGLGVVMYEMMCGRLPFYNQDHERLFELILMEEIRFPRTLGPEAKSLLAGLLKKDPKQRLGGGPSDAKEVMEHRFFLSINWQDVVQKKLLPPFKPQVTSEVDTRYFDDEFTAQSITITPPDRYDSLGSLELDQRTHFPQFSYSASIRE.

Met-1 bears the N-acetylmethionine mark. The region spanning 5–108 is the PH domain; it reads SVIKEGWLHK…WIRAIQMVAN (104 aa). A Phosphoserine modification is found at Ser-34. A disulfide bridge connects residues Cys-60 and Cys-77. Ser-126 is modified (phosphoserine). O-linked (GlcNAc) serine glycosylation is found at Ser-128 and Ser-131. Residues 152–409 form the Protein kinase domain; the sequence is FDYLKLLGKG…AKEVMEHRFF (258 aa). Residues 158–166 and Lys-181 contribute to the ATP site; that span reads LGKGTFGKV. Residue Asp-275 is the Proton acceptor of the active site. Residues Asn-280 and Asp-293 each coordinate Mn(2+). An O-linked (GlcNAc) threonine glycan is attached at Thr-306. Phosphothreonine; by PDPK1 is present on Thr-309. A glycan (O-linked (GlcNAc) threonine) is linked at Thr-313. Positions 410 to 481 constitute an AGC-kinase C-terminal domain; the sequence is LSINWQDVVQ…QFSYSASIRE (72 aa). Position 447 is a phosphoserine (Ser-447). At Thr-451 the chain carries Phosphothreonine. Phosphoserine is present on residues Ser-461, Ser-474, and Ser-478. Ser-474 carries an O-linked (GlcNAc) serine; alternate glycan.

Belongs to the protein kinase superfamily. AGC Ser/Thr protein kinase family. RAC subfamily. As to quaternary structure, interacts with BTBD10. Interacts with KCTD20. Interacts (via PH domain) with MTCP1, TCL1A and TCL1B; this interaction may facilitate AKT2 oligomerization and phosphorylation, hence increasing kinase activity. Interacts with PHB2; this interaction may be important for myogenic differentiation. Interacts (when phosphorylated) with CLIP3; this interaction promotes cell membrane localization. Interacts with WDFY2 (via WD repeats 1-3). Phosphorylation on Thr-309 and Ser-474 is required for full activity. Phosphorylation of the activation loop at Thr-309 by PDPK1/PDK1 is a prerequisite for full activation. Phosphorylated and activated by PDPK1/PDK1 in the presence of phosphatidylinositol 3,4,5-trisphosphate. Phosphorylation by mTORC2 in response to growth factors plays a key role in AKT1 activation: mTORC2 phosphorylates different sites depending on the context, such as Ser-474 or Ser-478, thereby facilitating subsequent phosphorylation of the activation loop by PDPK1/PDK1. In terms of processing, ubiquitinated; undergoes both 'Lys-48'- and 'Lys-63'-linked polyubiquitination. TRAF6-induced 'Lys-63'-linked AKT2 ubiquitination. When fully phosphorylated and translocated into the nucleus, undergoes 'Lys-48'-polyubiquitination catalyzed by TTC3, leading to its degradation by the proteasome. Post-translationally, O-GlcNAcylation at Thr-306 and Thr-313 inhibits activating phosphorylation at Thr-309 via disrupting the interaction between AKT and PDPK1/PDK1. Expressed in adipocytes and hepatocytes (at protein level). Expressed at low levels in skeletal muscle (at protein level).

The protein localises to the cytoplasm. It is found in the nucleus. It localises to the cell membrane. Its subcellular location is the early endosome. The enzyme catalyses L-seryl-[protein] + ATP = O-phospho-L-seryl-[protein] + ADP + H(+). The catalysed reaction is L-threonyl-[protein] + ATP = O-phospho-L-threonyl-[protein] + ADP + H(+). With respect to regulation, phosphorylation at Thr-309 (in the kinase domain) and Ser-474 (in the C-terminal regulatory region) is required for full activation. In adipocytes and hepatocytes, the activation is induced by insulin. AKT2 phosphorylation of PKP1 is induced by insulin. Its function is as follows. Serine/threonine kinase closely related to AKT1 and AKT3. All 3 enzymes, AKT1, AKT2 and AKT3, are collectively known as AKT kinase. AKT regulates many processes including metabolism, proliferation, cell survival, growth and angiogenesis, through the phosphorylation of a range of downstream substrates. Over 100 substrates have been reported so far, although for most of them, the precise AKT kinase catalyzing the reaction was not specified. AKT regulates glucose uptake by mediating insulin-induced translocation of the SLC2A4/GLUT4 glucose transporter to the cell surface. Phosphorylation of PTPN1 at 'Ser-50' negatively modulates its phosphatase activity preventing dephosphorylation of the insulin receptor and the attenuation of insulin signaling. Phosphorylation of TBC1D4 triggers the binding of this effector to inhibitory 14-3-3 proteins, which is required for insulin-stimulated glucose transport. AKT also regulates the storage of glucose in the form of glycogen by phosphorylating GSK3A at 'Ser-21' and GSK3B at 'Ser-9', resulting in inhibition of its kinase activity. Phosphorylation of GSK3 isoforms by AKT is also thought to be one mechanism by which cell proliferation is driven. AKT also regulates cell survival via the phosphorylation of MAP3K5 (apoptosis signal-related kinase). Phosphorylation of 'Ser-83' decreases MAP3K5 kinase activity stimulated by oxidative stress and thereby prevents apoptosis. AKT mediates insulin-stimulated protein synthesis by phosphorylating TSC2 at 'Ser-939' and 'Thr-1462', thereby activating mTORC1 signaling and leading to both phosphorylation of 4E-BP1 and in activation of RPS6KB1. AKT is involved in the phosphorylation of members of the FOXO factors (Forkhead family of transcription factors), leading to binding of 14-3-3 proteins and cytoplasmic localization. In particular, FOXO1 is phosphorylated at 'Thr-24', 'Ser-256' and 'Ser-319'. FOXO3 and FOXO4 are phosphorylated on equivalent sites. AKT has an important role in the regulation of NF-kappa-B-dependent gene transcription and positively regulates the activity of CREB1 (cyclic AMP (cAMP)-response element binding protein). The phosphorylation of CREB1 induces the binding of accessory proteins that are necessary for the transcription of pro-survival genes such as BCL2 and MCL1. AKT phosphorylates 'Ser-454' on ATP citrate lyase (ACLY), thereby potentially regulating ACLY activity and fatty acid synthesis. Activates the 3B isoform of cyclic nucleotide phosphodiesterase (PDE3B) via phosphorylation of 'Ser-273', resulting in reduced cyclic AMP levels and inhibition of lipolysis. Phosphorylates PIKFYVE on 'Ser-318', which results in increased PI(3)P-5 activity. The Rho GTPase-activating protein DLC1 is another substrate and its phosphorylation is implicated in the regulation cell proliferation and cell growth. AKT plays a role as key modulator of the AKT-mTOR signaling pathway controlling the tempo of the process of newborn neurons integration during adult neurogenesis, including correct neuron positioning, dendritic development and synapse formation. Signals downstream of phosphatidylinositol 3-kinase (PI(3)K) to mediate the effects of various growth factors such as platelet-derived growth factor (PDGF), epidermal growth factor (EGF), insulin and insulin-like growth factor 1 (IGF1). AKT mediates the antiapoptotic effects of IGF1. Essential for the SPATA13-mediated regulation of cell migration and adhesion assembly and disassembly. May be involved in the regulation of the placental development. In response to lysophosphatidic acid stimulation, inhibits the ciliogenesis cascade. In this context, phosphorylates WDR44, hence stabilizing its interaction with Rab11 and preventing the formation of the ciliogenic Rab11-FIP3-RAB3IP complex. Also phosphorylates RAB3IP/Rabin8, thus may affect RAB3IP guanine nucleotide exchange factor (GEF) activity toward Rab8, which is important for cilia growth. Phosphorylates PKP1, facilitating its interaction with YWHAG and translocation to the nucleus, ultimately resulting in a reduction in keratinocyte intercellular adhesion. Phosphorylation of PKP1 increases PKP1 protein stability, translocation to the cytoplasm away from desmosome plaques and PKP1-driven cap-dependent translation. In terms of biological role, several AKT2-specific substrates have been identified, including ANKRD2, C2CD5, CLK2 and PITX2. May play a role in myoblast differentiation. In this context, may act through PITX2 phosphorylation. Unphosphorylated PITX2 associates with an ELAVL1/HuR-containing complex, which stabilizes cyclin mRNA and ensuring cell proliferation. Phosphorylation by AKT2 impairs this association, leading to CCND1 mRNA destabilization and progression towards differentiation. Also involved in the negative regulation of myogenesis in response to stress conditions. In this context, acts by phosphorylating ANKRD2. May also be a key regulator of glucose uptake. Regulates insulin-stimulated glucose transport by the increase of glucose transporter GLUT4 translocation from intracellular stores to the plasma membrane. In this context, acts by phosphorylating C2CD5/CDP138 on 'Ser-197' in insulin-stimulated adipocytes. Through the phosphorylation of CLK2 on 'Thr-343', involved in insulin-regulated suppression of hepatic gluconeogenesis. In Rattus norvegicus (Rat), this protein is RAC-beta serine/threonine-protein kinase.